A 62-amino-acid chain; its full sequence is Photosystem II reaction center protein Z (62 aa).

A run of 2 helical transmembrane segments spans residues 8–28 and 41–61; these read ALIG…VAYA and WVGS…NFFV.

The protein belongs to the PsbZ family. PSII is composed of 1 copy each of membrane proteins PsbA, PsbB, PsbC, PsbD, PsbE, PsbF, PsbH, PsbI, PsbJ, PsbK, PsbL, PsbM, PsbT, PsbX, PsbY, PsbZ, Psb30/Ycf12, peripheral proteins PsbO, CyanoQ (PsbQ), PsbU, PsbV and a large number of cofactors. It forms dimeric complexes.

It localises to the cellular thylakoid membrane. May control the interaction of photosystem II (PSII) cores with the light-harvesting antenna, regulates electron flow through the 2 photosystem reaction centers. PSII is a light-driven water plastoquinone oxidoreductase, using light energy to abstract electrons from H(2)O, generating a proton gradient subsequently used for ATP formation. This chain is Photosystem II reaction center protein Z, found in Nostoc punctiforme (strain ATCC 29133 / PCC 73102).